A 539-amino-acid chain; its full sequence is MASILNQTQELQEASKVLGHVRCENFFIFPGENTLSDGLRGVLYFLGLAYCFIGLSAITARFFKSMENVVKHSRKVVAIDPITKAEIITYKKVWNFTIADISLLAFGTSFPQISLATIDAIRNIGERYAGGLGPGTLVGSAAFDLFPIHAVCVVVPKAGELKKISDLGVWLVELVWSFWAYIWLYIILEVWSPNVITLVEALLTVLQYGLLLVHAYAQDKRWPYLSLPMSRGDRPEEWVPEEIDTSKDDNDNDVHDVYSDAAQEAVESGSRNIVDIFSIHSANNDTGITYHTVADTPPDSATKKGKAKNSSVFDIWKHQFVDAITLETSESKKVDSIYLRIANSFWQLLLAPWKLLFAFVPPCNIAHGWIAFIFSLLFISGVAFVVTRFTDLISCVTGINPYVIAFTALASGTSWPDLVASKIAAERQLTADSAIANITCSNSVNIYVGIGVPWLINTVYNYFAYREPLYIENAKGLSFSLLIFFATSVGCIVVLVLRRLIIGAELGGPRLWAWLTSAYFMMLWVVFVVLSSLKVSGVI.

11 helical membrane passes run 38-58 (GLRGVLYFLGLAYCFIGLSAI), 98-118 (IADISLLAFGTSFPQISLATI), 135-155 (GTLVGSAAFDLFPIHAVCVVV), 167-187 (LGVWLVELVWSFWAYIWLYII), 195-215 (VITLVEALLTVLQYGLLLVHA), 341-361 (IANSFWQLLLAPWKLLFAFVP), 365-385 (IAHGWIAFIFSLLFISGVAFV), 392-412 (LISCVTGINPYVIAFTALASG), 444-464 (VNIYVGIGVPWLINTVYNYFA), 477-497 (LSFSLLIFFATSVGCIVVLVL), and 511-531 (LWAWLTSAYFMMLWVVFVVLS).

It belongs to the Ca(2+):cation antiporter (CaCA) (TC 2.A.19) family. MHX subfamily. As to expression, high expression in leaves (at protein level).

The protein localises to the vacuole membrane. In terms of biological role, vacuolar transporter that exchanges protons with Mg(2+), Zn(2+) and Fe(2+) ions. May control the partitioning of Mg(2+) and Zn(2+) between plant organs. Could play a role in Zn(2+) accumulation or tolerance. The polypeptide is Magnesium/proton exchanger (MHX) (Arabidopsis halleri subsp. halleri (Arabis halleri)).